Consider the following 124-residue polypeptide: Autophagy-related protein 8 (124 aa).

Residue Gly116 is the site of Phosphatidylethanolamine amidated glycine attachment. Positions Gly117 to Lys124 are cleaved as a propeptide — removed in mature form.

This sequence belongs to the ATG8 family. As to quaternary structure, conjugation to phosphatidylethanolamine (PE) leads to homodimerization. Interacts with ATG1, ATG3, ATG4, ATG7 and ATG12. The C-terminal 8 residues of ATG8 are removed by ATG4 to expose Gly-116 at the C-terminus. This Gly-116 forms then a thioester bond with the 'Cys-550' of ATG7 (E1-like activating enzyme) before being transferred to the 'Cys-244' of ATG3 (the specific E2 conjugating enzyme), in order to be finally amidated with phosphatidylethanolamine. This lipid modification anchors ATG8 to membranes and can be reversed by ATG4, releasing soluble ATG8.

It is found in the cytoplasmic vesicle. Its subcellular location is the cvt vesicle membrane. The protein localises to the autophagosome membrane. It localises to the vacuole membrane. In terms of biological role, ubiquitin-like modifier involved in cytoplasm to vacuole transport (Cvt) vesicles and autophagosome formation. With ATG4, mediates the delivery of the vesicles and autophagosomes to the vacuole via the microtubule cytoskeleton. Required for selective autophagic degradation of the nucleus (nucleophagy) as well as for mitophagy which contributes to regulate mitochondrial quantity and quality by eliminating the mitochondria to a basal level to fulfill cellular energy requirements and preventing excess ROS production. Also participates in membrane fusion events that take place in the early secretory pathway. Also involved in endoplasmic reticulum-specific autophagic process and is essential for the survival of cells subjected to severe ER stress. The ATG8-PE conjugate mediates tethering between adjacent membranes and stimulates membrane hemifusion, leading to expansion of the autophagosomal membrane during autophagy. Moreover not only conjugation, but also subsequent ATG8-PE deconjugation is an important step required to facilitate multiple events during macroautophagy, and especially for efficient autophagosome biogenesis, the assembly of ATG9-containing tubulovesicular clusters into phagophores/autophagosomes, and for the disassembly of PAS-associated ATG components. This Kluyveromyces marxianus (strain DMKU3-1042 / BCC 29191 / NBRC 104275) (Yeast) protein is Autophagy-related protein 8.